Reading from the N-terminus, the 1347-residue chain is Spermatogenesis-associated protein 31A1 (1347 aa).

Residues P23 to L43 form a helical membrane-spanning segment. Disordered regions lie at residues P55–R89, G106–I235, E373–K397, D628–K658, P899–V955, and H1085–V1160. A compositionally biased stretch (basic residues) spans G60 to R82. The segment covering L165–V178 has biased composition (polar residues). Pro residues predominate over residues P198 to K222. Composition is skewed to polar residues over residues P631–E651 and L927–A948. 2 stretches are compositionally biased toward basic and acidic residues: residues H1108 to G1127 and R1137 to E1146.

The protein belongs to the SPATA31 family.

It localises to the membrane. May play a role in spermatogenesis. This is Spermatogenesis-associated protein 31A1 from Homo sapiens (Human).